The sequence spans 132 residues: Small ribosomal subunit protein uS8 (132 aa).

The protein belongs to the universal ribosomal protein uS8 family. As to quaternary structure, part of the 30S ribosomal subunit. Contacts proteins S5 and S12.

One of the primary rRNA binding proteins, it binds directly to 16S rRNA central domain where it helps coordinate assembly of the platform of the 30S subunit. The protein is Small ribosomal subunit protein uS8 of Staphylococcus saprophyticus subsp. saprophyticus (strain ATCC 15305 / DSM 20229 / NCIMB 8711 / NCTC 7292 / S-41).